The primary structure comprises 106 residues: Nucleoid-associated protein RPA0616 (106 aa).

The protein belongs to the YbaB/EbfC family. Homodimer.

The protein localises to the cytoplasm. The protein resides in the nucleoid. In terms of biological role, binds to DNA and alters its conformation. May be involved in regulation of gene expression, nucleoid organization and DNA protection. In Rhodopseudomonas palustris (strain ATCC BAA-98 / CGA009), this protein is Nucleoid-associated protein RPA0616.